A 431-amino-acid chain; its full sequence is Hydroxylamine reductase (431 aa).

The [4Fe-4S] cluster site is built by cysteine 5, cysteine 8, cysteine 17, and cysteine 23. Residues histidine 131, glutamate 155, cysteine 199, cysteine 286, cysteine 314, cysteine 339, glutamate 373, and lysine 375 each coordinate hybrid [4Fe-2O-2S] cluster. At cysteine 286 the chain carries Cysteine persulfide.

The protein belongs to the HCP family. [4Fe-4S] cluster is required as a cofactor. The cofactor is hybrid [4Fe-2O-2S] cluster.

It is found in the cytoplasm. It carries out the reaction A + NH4(+) + H2O = hydroxylamine + AH2 + H(+). In terms of biological role, catalyzes the reduction of hydroxylamine to form NH(3) and H(2)O. The polypeptide is Hydroxylamine reductase (Thermotoga maritima (strain ATCC 43589 / DSM 3109 / JCM 10099 / NBRC 100826 / MSB8)).